The following is a 503-amino-acid chain: Cytochrome c-552 (503 aa).

The signal sequence occupies residues 1–16 (MKKNTIILVGALIAIA). His-102 serves as a coordination point for heme c. The heme site is built by Cys-130, Cys-133, and Lys-134. 6 residues coordinate heme c: Cys-168, Cys-171, His-172, Cys-210, Cys-213, and His-214. The Ca(2+) site is built by Glu-216, Tyr-217, Lys-273, and Gln-275. Residue Tyr-217 participates in substrate binding. A substrate-binding site is contributed by His-276. The heme c site is built by His-287, Cys-294, Cys-297, His-298, His-312, Cys-325, Cys-328, His-329, and His-404.

It belongs to the cytochrome c-552 family. It depends on Ca(2+) as a cofactor. Heme c serves as cofactor.

The protein resides in the periplasm. The catalysed reaction is 6 Fe(III)-[cytochrome c] + NH4(+) + 2 H2O = 6 Fe(II)-[cytochrome c] + nitrite + 8 H(+). The protein operates within nitrogen metabolism; nitrate reduction (assimilation). In terms of biological role, catalyzes the reduction of nitrite to ammonia, consuming six electrons in the process. This chain is Cytochrome c-552, found in Maridesulfovibrio salexigens (strain ATCC 14822 / DSM 2638 / NCIMB 8403 / VKM B-1763) (Desulfovibrio salexigens).